Consider the following 205-residue polypeptide: Colicin-E8 (205 aa).

Disordered stretches follow at residues 24-109 (AQTD…PDRI) and 136-187 (PELS…VYDM). 3 stretches are compositionally biased toward basic and acidic residues: residues 53–76 (QERR…ESKR), 88–99 (PVGDKWLDDAGK), and 159–178 (RNKD…DKPI). Positions 173, 198, and 202 each coordinate Zn(2+).

This sequence belongs to the colicin/pyosin nuclease family.

In terms of biological role, this plasmid-coded bactericidal protein is an endonuclease active on both single- and double-stranded DNA but with undefined specificity. Functionally, colicins are polypeptide toxins produced by and active against E.coli and closely related bacteria. This chain is Colicin-E8 (col), found in Escherichia coli.